The following is an 833-amino-acid chain: Serine/threonine-protein phosphatase 4 regulatory subunit 3A (833 aa).

The WH1 domain occupies methionine 1–valine 100. Residues serine 117 and serine 127 each carry the phosphoserine modification. The residue at position 655 (lysine 655) is an N6-acetyllysine. Residues phenylalanine 683–glutamate 694 are compositionally biased toward acidic residues. 2 disordered regions span residues phenylalanine 683–proline 712 and lysine 733–serine 833. 7 positions are modified to phosphoserine: serine 698, serine 741, serine 768, serine 771, serine 774, serine 777, and serine 780. Positions threonine 734–glycine 751 are enriched in polar residues. The segment covering threonine 752–serine 768 has biased composition (low complexity). Residues proline 785–isoleucine 794 are compositionally biased toward polar residues. Positions tyrosine 806 to glutamate 820 are enriched in acidic residues.

It belongs to the SMEK family. As to quaternary structure, serine/threonine-protein phosphatase 4 (PP4) occurs in different assemblies of the catalytic and one or more regulatory subunits. Component of the PP4 complex PPP4C-PPP4R2-PPP4R3A. Interacts with PPP4C; the interaction requires PPP4R2.

Its subcellular location is the cytoplasm. It is found in the cytoskeleton. The protein localises to the microtubule organizing center. It localises to the centrosome. The protein resides in the nucleus. Its function is as follows. Regulatory subunit of serine/threonine-protein phosphatase 4. May regulate the activity of PPP4C at centrosomal microtubule organizing centers. The PPP4C-PPP4R2-PPP4R3A PP4 complex specifically dephosphorylates H2AX phosphorylated on 'Ser-140' (gamma-H2AX) generated during DNA replication and required for DNA DSB repair. This chain is Serine/threonine-protein phosphatase 4 regulatory subunit 3A, found in Homo sapiens (Human).